We begin with the raw amino-acid sequence, 693 residues long: Serine/threonine-protein kinase Pkn1 (693 aa).

A Protein kinase domain is found at 59 to 328; it reads FRLVRRLGRG…QVALAEHVRV (270 aa). ATP is bound by residues 65 to 73 and lysine 88; that span reads LGRGGMGAV. The active-site Proton acceptor is the aspartate 180. In terms of domain architecture, PilZ spans 393–491; it reads LVEVPVQVVL…LKAAVDALLQ (99 aa). A TPR repeat occupies 630–663; sequence ARSHFQSGGALERDGQLSQALDQYERGLKLAPLE.

It belongs to the protein kinase superfamily. Ser/Thr protein kinase family. In terms of processing, autophosphorylated.

It catalyses the reaction L-seryl-[protein] + ATP = O-phospho-L-seryl-[protein] + ADP + H(+). The catalysed reaction is L-threonyl-[protein] + ATP = O-phospho-L-threonyl-[protein] + ADP + H(+). May be regulated by calcium or a calmodulin-like protein. Its function is as follows. Plays an essential role in proper timing of early development events. In Myxococcus xanthus, this protein is Serine/threonine-protein kinase Pkn1 (pkn1).